A 306-amino-acid polypeptide reads, in one-letter code: Eukaryotic translation initiation factor 2 subunit alpha (306 aa).

The 72-residue stretch at 17-88 (DELVVVNVRQ…EKGYIDLSKR (72 aa)) folds into the S1 motif domain. At Ser-52 the chain carries Phosphoserine. At Thr-179 the chain carries Phosphothreonine. Phosphoserine occurs at positions 273, 295, 303, and 305.

It belongs to the eIF-2-alpha family. In terms of assembly, eukaryotic translation initiation factor 2 eIF2 is a heterotrimeric complex composed of an alpha, a beta and a gamma subunit.

The protein resides in the cytoplasm. The protein localises to the cytosol. In terms of biological role, eIF-2 functions in the early steps of protein synthesis by forming a ternary complex with GTP and initiator tRNA. This complex binds to a 40S ribosomal subunit, followed by mRNA binding to form a 43S pre-initiation complex. Junction of the 60S ribosomal subunit to form the 80S initiation complex is preceded by hydrolysis of the GTP bound to eIF-2 and release of an eIF-2-GDP binary complex. In order for eIF-2 to recycle and catalyze another round of initiation, the GDP bound to eIF-2 must exchange with GTP by way of a reaction catalyzed by eIF2B. This Schizosaccharomyces pombe (strain 972 / ATCC 24843) (Fission yeast) protein is Eukaryotic translation initiation factor 2 subunit alpha (tif211).